Here is a 365-residue protein sequence, read N- to C-terminus: Alanine racemase (365 aa).

Lysine 32 functions as the Proton acceptor; specific for D-alanine in the catalytic mechanism. The residue at position 32 (lysine 32) is an N6-(pyridoxal phosphate)lysine. Residue arginine 128 coordinates substrate. Catalysis depends on tyrosine 257, which acts as the Proton acceptor; specific for L-alanine. Methionine 305 lines the substrate pocket.

Belongs to the alanine racemase family. Requires pyridoxal 5'-phosphate as cofactor.

It catalyses the reaction L-alanine = D-alanine. It functions in the pathway amino-acid biosynthesis; D-alanine biosynthesis; D-alanine from L-alanine: step 1/1. Functionally, catalyzes the interconversion of L-alanine and D-alanine. May also act on other amino acids. The protein is Alanine racemase (alr) of Francisella tularensis subsp. novicida (strain U112).